A 1000-amino-acid chain; its full sequence is C-module-binding factor A (1000 aa).

The region spanning 113-280 (PREWQEYLSH…ISYFSSLPHT (168 aa)) is the JmjC domain. A PHD-type; atypical zinc finger spans residues 489 to 544 (KIKCHRCEKRFKKFSIIFCTNCNARFCEQCVVNTFGQNFQVLMKRNEWECFCCKGL). Residues 492-542 (CHRCEKRFKKFSIIFCTNCNARFCEQCVVNTFGQNFQVLMKRNEWECFCCK) form an RING-type; degenerate zinc finger. Disordered stretches follow at residues 561–647 (RILN…SSYS) and 660–818 (SYGS…KNLK). Low complexity-rich tracts occupy residues 574–647 (NNNN…SSYS), 660–683 (SYGSYDNYNNNNNNNNYNNNNNNN), 700–710 (SSSSGSGSSNS), 732–751 (NNNNNNNHHNNNNNNNNNHH), and 760–789 (NNNNNNNNNNPTTSSLSSLSTSLSSSSTST). A compositionally biased stretch (basic and acidic residues) spans 805–818 (DNDKPKGRPPKNLK). A DNA-binding region (a.T hook) is located at residues 810 to 818 (KGRPPKNLK).

Monomer.

It localises to the nucleus. In terms of biological role, transcriptional regulator involved in phagocytosis and pinocytosis. Both activates and represses transcription. Regulates expression of acaA, carA, pkaC, csaA, cotB and lagC. Promotes amplification of the tRNA gene-associated retrotransposon TRE5-A, a mobile genetic element formerly called as Dictyostelium repetitive element (DRE). Suppresses agnC and agnE encoding argonaute proteins which are part of a RNA interference pathway controlling TRE5-A amplification. Required for amplification of both sense and antisense RNA transcripts, but does not activate their promoters found in A-module and C-module of the TRE5-A, respectively. Nevertheless, binds to distinct DNA sequences containing A and T stretches within the C-module in vitro. The chain is C-module-binding factor A from Dictyostelium discoideum (Social amoeba).